Consider the following 119-residue polypeptide: Large ribosomal subunit protein bL20 (119 aa).

Belongs to the bacterial ribosomal protein bL20 family.

Functionally, binds directly to 23S ribosomal RNA and is necessary for the in vitro assembly process of the 50S ribosomal subunit. It is not involved in the protein synthesizing functions of that subunit. This Sorangium cellulosum (strain So ce56) (Polyangium cellulosum (strain So ce56)) protein is Large ribosomal subunit protein bL20.